We begin with the raw amino-acid sequence, 324 residues long: MLNTLLTHLINPLAYIVPVLLAVAFLTLLERKVLGYMQLRKGPNIVGPYGLLQPIADGVKLFIKEPIRPSTASPTLFLVTPMLALTLAMTLWAPMPMPHPIIDLNLGVLFILALSSLAVYSILGSGWASNSKYALIGALRAVAQTISYEVSLGLILRSIIIFWGGYTVQTFNTTQEALWLLLPACPLAAMWYISTLAETNRAPFDLTEGESELAPGFNVEYAGGPFALLFLAEYANILLMNTLSAILFLGASHMPAIPELTTINLMTKAALLSVVFLWVRASYPRFRYDQLMHLVWKNFLPLTLALVLWHTALPIAFAGLPPQL.

Transmembrane regions (helical) follow at residues 9-29, 76-96, 106-126, 146-166, 177-197, 228-248, 259-279, and 299-319; these read LINP…LTLL, LFLV…APMP, LGVL…LGSG, ISYE…WGGY, ALWL…STLA, LLFL…AILF, ELTT…FLWV, and FLPL…AFAG.

This sequence belongs to the complex I subunit 1 family.

It is found in the mitochondrion inner membrane. It catalyses the reaction a ubiquinone + NADH + 5 H(+)(in) = a ubiquinol + NAD(+) + 4 H(+)(out). Its function is as follows. Core subunit of the mitochondrial membrane respiratory chain NADH dehydrogenase (Complex I) that is believed to belong to the minimal assembly required for catalysis. Complex I functions in the transfer of electrons from NADH to the respiratory chain. The immediate electron acceptor for the enzyme is believed to be ubiquinone. This is NADH-ubiquinone oxidoreductase chain 1 (MT-ND1) from Formosania lacustris (Oriental stream loach).